The primary structure comprises 463 residues: Fumarate hydratase class II (463 aa).

Substrate contacts are provided by residues 97–99, 128–131, 138–140, and Thr-186; these read SGT, HPND, and SSN. Residue His-187 is the Proton donor/acceptor of the active site. Residue Ser-317 is part of the active site. Residues Ser-318 and 323-325 each bind substrate; that span reads KVN.

This sequence belongs to the class-II fumarase/aspartase family. Fumarase subfamily. In terms of assembly, homotetramer.

Its subcellular location is the cytoplasm. The enzyme catalyses (S)-malate = fumarate + H2O. It functions in the pathway carbohydrate metabolism; tricarboxylic acid cycle; (S)-malate from fumarate: step 1/1. In terms of biological role, involved in the TCA cycle. Catalyzes the stereospecific interconversion of fumarate to L-malate. The polypeptide is Fumarate hydratase class II (Campylobacter jejuni subsp. jejuni serotype O:2 (strain ATCC 700819 / NCTC 11168)).